A 548-amino-acid chain; its full sequence is MAAKDVVFGGEARARMVEGVNILANAVKVTLGPKGRNVVLERSFGAPTVTKDGVSVAKEIELKDKLQNMGAQMVKEVASKTSDNAGDGTTTATVLAQAIVREGMKYVAAGMNPMDLKRGIDKAVVSLVEQLKKQSKPTTTSKEIAQVGTISANSDDDVGQIIASAMDKVGKEGVITVEDGKSLNNELDVVEGMQFDRGYLSPYFINNPEKQSAVLDNPFVLLYDKKISNIRDLLPTLEQVAKSGRPLLIIAEEVEGEALATLVVNTIRGILKVVAVKAPGFGDRRKAMLEDIAILTGGKVIAEEVGLTLEKVTLADLGQAKRVEVGKENTTIIDGAGAAGDIEARVKQVRVQIEEATSDYDREKLQERVAKLAGGVAVIKVGAATEVEMKEKKARVEDALHATRAAVEEGIVAGGGVALLRAKQAAGAIKGDNADQDAGIKLILRAIEEPLRIIVTNAGDEASVVVNAVLAGKGNYGYNAANGTYGDMIEMGILDPTKVTRTALQNAASVAALMLTTEAMVAESPKDDAPAGGMPGGMGGMGGMGMDM.

ATP contacts are provided by residues 30–33, K51, 87–91, G415, 479–481, and D495; these read TLGP, DGTTT, and NAA.

This sequence belongs to the chaperonin (HSP60) family. As to quaternary structure, forms a cylinder of 14 subunits composed of two heptameric rings stacked back-to-back. Interacts with the co-chaperonin GroES.

The protein localises to the cytoplasm. It catalyses the reaction ATP + H2O + a folded polypeptide = ADP + phosphate + an unfolded polypeptide.. Together with its co-chaperonin GroES, plays an essential role in assisting protein folding. The GroEL-GroES system forms a nano-cage that allows encapsulation of the non-native substrate proteins and provides a physical environment optimized to promote and accelerate protein folding. This Methylibium petroleiphilum (strain ATCC BAA-1232 / LMG 22953 / PM1) protein is Chaperonin GroEL.